A 156-amino-acid polypeptide reads, in one-letter code: Transcription elongation factor GreA (156 aa).

The stretch at 1–32 (MKKVRLTREGYEKLKQELEELKRKFMYEISER) forms a coiled coil.

It belongs to the GreA/GreB family.

In terms of biological role, necessary for efficient RNA polymerase transcription elongation past template-encoded arresting sites. The arresting sites in DNA have the property of trapping a certain fraction of elongating RNA polymerases that pass through, resulting in locked ternary complexes. Cleavage of the nascent transcript by cleavage factors such as GreA or GreB allows the resumption of elongation from the new 3'terminus. GreA releases sequences of 2 to 3 nucleotides. This is Transcription elongation factor GreA from Thermotoga neapolitana (strain ATCC 49049 / DSM 4359 / NBRC 107923 / NS-E).